A 791-amino-acid polypeptide reads, in one-letter code: ATP-dependent 6-phosphofructokinase, platelet type (791 aa).

Met-1 bears the N-acetylmethionine mark. Positions 1–399 (MDNKVSASPR…NLNTYKRLAI (399 aa)) are N-terminal catalytic PFK domain 1. Phosphoserine is present on Ser-6. Position 12 is a phosphoserine; by PKA (Ser-12). A Phosphoserine modification is found at Ser-21. ATP is bound by residues Gly-34, 97-98 (RS), and 127-130 (GSGS). Ser-142 carries the post-translational modification Phosphoserine. Substrate-binding positions include 173-175 (SID), Arg-210, 217-219 (MGR), Glu-273, Arg-301, and 307-310 (HVQR). Residue Asp-175 is the Proton acceptor of the active site. Ser-386 bears the Phosphoserine mark. Position 395 is an N6-acetyllysine (Lys-395). The tract at residues 400-411 (KLPDDKIQKSNC) is interdomain linker. The tract at residues 412–791 (NVAVINVGAP…RGGPEEPAAI (380 aa)) is C-terminal regulatory PFK domain 2. A beta-D-fructose 2,6-bisphosphate-binding site is contributed by Arg-481. N6-acetyllysine is present on Lys-486. Beta-D-fructose 2,6-bisphosphate-binding positions include 538–542 (TVSNN), Arg-576, 583–585 (MGG), and Glu-639. Ser-540 carries an O-linked (GlcNAc) serine glycan. Residue Tyr-651 is modified to Phosphotyrosine. Residues Arg-665 and 671-674 (HMQQ) contribute to the beta-D-fructose 2,6-bisphosphate site. Residue Lys-688 is modified to N6-acetyllysine. Arg-744 is a binding site for beta-D-fructose 2,6-bisphosphate.

Belongs to the phosphofructokinase type A (PFKA) family. ATP-dependent PFK group I subfamily. Eukaryotic two domain clade 'E' sub-subfamily. As to quaternary structure, homo- and heterotetramers. Phosphofructokinase (PFK) enzyme functions as a tetramer composed of different combinations of 3 types of subunits, called PFKM (M), PFKL (L) and PFKP (P). The composition of the PFK tetramer differs according to the tissue type it is present in. The kinetic and regulatory properties of the tetrameric enzyme are dependent on the subunit composition, hence can vary across tissues. Interacts with ATG4B; promoting phosphorylation of ATG4B. Requires Mg(2+) as cofactor. In terms of processing, glcNAcylation decreases enzyme activity. Phosphorylation at Ser-386 promotes interaction with ATG4B.

Its subcellular location is the cytoplasm. It carries out the reaction beta-D-fructose 6-phosphate + ATP = beta-D-fructose 1,6-bisphosphate + ADP + H(+). The protein operates within carbohydrate degradation; glycolysis; D-glyceraldehyde 3-phosphate and glycerone phosphate from D-glucose: step 3/4. With respect to regulation, allosterically activated by ADP, AMP, or fructose 2,6-bisphosphate, and allosterically inhibited by ATP or citrate. Catalyzes the phosphorylation of D-fructose 6-phosphate to fructose 1,6-bisphosphate by ATP, the first committing step of glycolysis. In Oryctolagus cuniculus (Rabbit), this protein is ATP-dependent 6-phosphofructokinase, platelet type (PFKP).